The sequence spans 108 residues: uncharacterized protein (108 aa).

This is an uncharacterized protein from Pasteurella multocida (strain Pm70).